The chain runs to 447 residues: Maltoporin (447 aa).

The signal sequence occupies residues 1-26 (MELRMKKVSVIAAAVAATLAAGSAFA).

Belongs to the porin LamB (TC 1.B.3) family. As to quaternary structure, homotrimer formed of three 18-stranded antiparallel beta-barrels, containing three independent channels.

It localises to the cell outer membrane. It carries out the reaction beta-maltose(in) = beta-maltose(out). Involved in the transport of maltose and maltodextrins. This chain is Maltoporin, found in Vibrio campbellii (strain ATCC BAA-1116).